A 198-amino-acid polypeptide reads, in one-letter code: Ras-related protein RabH (198 aa).

Glycine 14–serine 21 is a binding site for GTP. The Effector region signature appears at threonine 36–phenylalanine 44. GTP is bound by residues aspartate 62 to methionine 66 and serine 120 to aspartate 123. Cysteine 195 carries the cysteine methyl ester modification. Cysteine 195 carries S-geranylgeranyl cysteine lipidation. A propeptide spans serine 196–asparagine 198 (removed in mature form).

Belongs to the small GTPase superfamily. Rab family.

It is found in the cell membrane. This chain is Ras-related protein RabH (rabH), found in Dictyostelium discoideum (Social amoeba).